We begin with the raw amino-acid sequence, 576 residues long: F-actin capping regulator BSP1 (576 aa).

The tract at residues Arg-24–Arg-50 is disordered. A phosphoserine mark is found at Ser-46, Ser-79, and Ser-88. 2 disordered regions span residues Asn-132–Lys-160 and Gly-173–Pro-316. Ser-185 carries the phosphoserine modification. Over residues Thr-191–Pro-206 the composition is skewed to basic and acidic residues. The residue at position 220 (Ser-220) is a Phosphoserine. 2 stretches are compositionally biased toward polar residues: residues Ser-243 to Leu-255 and Lys-264 to Ser-279. Pro residues predominate over residues Lys-304–Lys-313. 2 positions are modified to phosphoserine: Ser-309 and Ser-320. Positions Ser-408–Arg-470 are interaction with F-actin. Positions Asp-541–Val-576 are disordered. Residues Thr-544 to Pro-556 show a composition bias toward basic and acidic residues. The interaction with the F-actin capping complex stretch occupies residues Arg-547–Val-576. Residues Asn-561–Val-576 are compositionally biased toward basic residues.

As to quaternary structure, interacts (via C-terminus) with the CAP1-CAP2 F-actin capping protein complex. Interacts with INP52 (via SAC domain); the interaction is direct. Interacts with INP53 (via SAC domain); the interaction is direct. Interacts with RVS167. Interacts with SLA1. In terms of processing, phosphorylated by CDC28.

It localises to the cytoplasm. The protein resides in the cytoskeleton. It is found in the actin patch. Its subcellular location is the cell membrane. Functionally, recruits the capping protein complex to actin patches and the actomyosin contractile ring, and/or stabilizes their interaction. May serve as an adapter to link INP52 and INP53 to the cortical actin cytoskeleton. Binds F-actin. This chain is F-actin capping regulator BSP1 (BSP1), found in Saccharomyces cerevisiae (strain ATCC 204508 / S288c) (Baker's yeast).